The chain runs to 55 residues: UPF0391 membrane protein Tbd_2772 (55 aa).

The next 2 helical transmembrane spans lie at 1–21 and 28–48; these read MFGWAITFLVIAIAAGIFGFA and AWIAKVLFVVGLAAVLIMLVM.

The protein belongs to the UPF0391 family.

It localises to the cell membrane. The polypeptide is UPF0391 membrane protein Tbd_2772 (Thiobacillus denitrificans (strain ATCC 25259 / T1)).